We begin with the raw amino-acid sequence, 458 residues long: MALDQVSIPPSYHGLAIQRIPLRTGLVPAEPMKTLVPSKSKLNTIEAKRIMSVLDEAIHKIELITLMSYMESHPEALEDTLPEDFVRALREHLDIGQTLVERASILQRRHKKLEEEEEAEETRNQERLLSLELHKVNLLTLAHQFRDSTKTVLRLVLGEPQFTRLLQVQAPGRSPGAQCLLDGLVELRGFLFEKLLTSPMEVREKNQFIQDISRRSERNQEVIDDLQAELANVLKNKESEVEKENFVIQELKNHLHQVFKFSENSLLRTKQEAEKQQKVDFRASQVRLAKTQQDILALRAQYHNLVMENREAEQALRKKKYKVETEIENWIQKYDMEMGEKQDEYEDLESIHKEEKLQLEELRERHAVLVEEFSQIRAESEINSKKRVEAEREMVRMVRAATLIQAVWKGYLVRSILRSKKKKRGKGKGKDKGKGKEKPKEEKAKEKKPKAKGKGKKK.

3 coiled-coil regions span residues 96–137 (GQTL…HKVN), 209–255 (IQDI…KNHL), and 285–379 (QVRL…IRAE). An IQ domain is found at 397 to 426 (MVRAATLIQAVWKGYLVRSILRSKKKKRGK). The segment at 419–458 (SKKKKRGKGKGKDKGKGKEKPKEEKAKEKKPKAKGKGKKK) is disordered. Over residues 428–445 (KGKDKGKGKEKPKEEKAK) the composition is skewed to basic and acidic residues. Over residues 446–458 (EKKPKAKGKGKKK) the composition is skewed to basic residues.

The protein belongs to the DRC10 family. As to quaternary structure, component of the nexin-dynein regulatory complex (N-DRC). Interacts with CFAP52.

It localises to the cytoplasm. The protein localises to the cytoskeleton. It is found in the flagellum axoneme. Functionally, component of the nexin-dynein regulatory complex (N-DRC), a key regulator of ciliary/flagellar motility which maintains the alignment and integrity of the distal axoneme and regulates microtubule sliding in motile axonemes. This chain is Dynein regulatory complex protein 10 (Iqcd), found in Mus musculus (Mouse).